Reading from the N-terminus, the 86-residue chain is MPKSEIHPKWYPDAKVICNGEVVMTTGSTKPELHVDVWSGNHPFFTGTQKILDTEGRVDRFMKKYGMGSADSATSQETKEAKESDK.

The segment at 66–86 (GMGSADSATSQETKEAKESDK) is disordered. Residues 77-86 (ETKEAKESDK) show a composition bias toward basic and acidic residues.

The protein belongs to the bacterial ribosomal protein bL31 family. Type A subfamily. In terms of assembly, part of the 50S ribosomal subunit.

Functionally, binds the 23S rRNA. The protein is Large ribosomal subunit protein bL31 of Prochlorococcus marinus (strain MIT 9515).